A 258-amino-acid chain; its full sequence is Acyl-[acyl-carrier-protein]--UDP-N-acetylglucosamine O-acyltransferase (258 aa).

Belongs to the transferase hexapeptide repeat family. LpxA subfamily. Homotrimer.

Its subcellular location is the cytoplasm. It carries out the reaction a (3R)-hydroxyacyl-[ACP] + UDP-N-acetyl-alpha-D-glucosamine = a UDP-3-O-[(3R)-3-hydroxyacyl]-N-acetyl-alpha-D-glucosamine + holo-[ACP]. It participates in glycolipid biosynthesis; lipid IV(A) biosynthesis; lipid IV(A) from (3R)-3-hydroxytetradecanoyl-[acyl-carrier-protein] and UDP-N-acetyl-alpha-D-glucosamine: step 1/6. Functionally, involved in the biosynthesis of lipid A, a phosphorylated glycolipid that anchors the lipopolysaccharide to the outer membrane of the cell. In Pseudomonas entomophila (strain L48), this protein is Acyl-[acyl-carrier-protein]--UDP-N-acetylglucosamine O-acyltransferase.